Consider the following 716-residue polypeptide: Fatty acid oxidation complex subunit alpha (716 aa).

The enoyl-CoA hydratase/isomerase stretch occupies residues 1-189 (MIYQSPTIQV…KVGAVDAVVA (189 aa)). Asp-296 provides a ligand contact to substrate. The interval 311-716 (KEVKNAAVLG…ATNNGSYYQA (406 aa)) is 3-hydroxyacyl-CoA dehydrogenase. NAD(+)-binding positions include Met-324, Asp-343, 400–402 (VVE), Lys-407, and Ser-429. His-450 functions as the For 3-hydroxyacyl-CoA dehydrogenase activity in the catalytic mechanism. Asn-453 provides a ligand contact to NAD(+). Substrate-binding residues include Asn-500 and Tyr-660.

In the N-terminal section; belongs to the enoyl-CoA hydratase/isomerase family. It in the C-terminal section; belongs to the 3-hydroxyacyl-CoA dehydrogenase family. Heterotetramer of two alpha chains (FadB) and two beta chains (FadA).

The catalysed reaction is a (3S)-3-hydroxyacyl-CoA + NAD(+) = a 3-oxoacyl-CoA + NADH + H(+). It carries out the reaction a (3S)-3-hydroxyacyl-CoA = a (2E)-enoyl-CoA + H2O. The enzyme catalyses a 4-saturated-(3S)-3-hydroxyacyl-CoA = a (3E)-enoyl-CoA + H2O. It catalyses the reaction (3S)-3-hydroxybutanoyl-CoA = (3R)-3-hydroxybutanoyl-CoA. The catalysed reaction is a (3Z)-enoyl-CoA = a 4-saturated (2E)-enoyl-CoA. It carries out the reaction a (3E)-enoyl-CoA = a 4-saturated (2E)-enoyl-CoA. Its pathway is lipid metabolism; fatty acid beta-oxidation. Its function is as follows. Involved in the aerobic and anaerobic degradation of long-chain fatty acids via beta-oxidation cycle. Catalyzes the formation of 3-oxoacyl-CoA from enoyl-CoA via L-3-hydroxyacyl-CoA. It can also use D-3-hydroxyacyl-CoA and cis-3-enoyl-CoA as substrate. The protein is Fatty acid oxidation complex subunit alpha of Shewanella putrefaciens (strain CN-32 / ATCC BAA-453).